We begin with the raw amino-acid sequence, 170 residues long: MSLSGPRIGRAHQQQGDTMAINVEPALSPHLVVDDAASAIDFYVKAFDAVELGRVPGPDGKLIHAALRINGFTVMLNDDVPQMCGGKSMTPTSLGGTPVTIHLTVTDVDAKFQRALNAGATVVTALEDQLWGDRYGVVADPFGHHWSLGQPVREVNMDEIQAAMSSQGDG.

One can recognise a VOC domain in the interval 25–151; it reads PALSPHLVVD…FGHHWSLGQP (127 aa).

This is an uncharacterized protein from Mycobacterium tuberculosis (strain CDC 1551 / Oshkosh).